Reading from the N-terminus, the 469-residue chain is ATP-dependent protease ATPase subunit HslU (469 aa).

ATP-binding positions include Ile-24, 66–71 (GVGKTE), Asp-282, Glu-347, and Arg-419.

The protein belongs to the ClpX chaperone family. HslU subfamily. A double ring-shaped homohexamer of HslV is capped on each side by a ring-shaped HslU homohexamer. The assembly of the HslU/HslV complex is dependent on binding of ATP.

The protein localises to the cytoplasm. Its function is as follows. ATPase subunit of a proteasome-like degradation complex; this subunit has chaperone activity. The binding of ATP and its subsequent hydrolysis by HslU are essential for unfolding of protein substrates subsequently hydrolyzed by HslV. HslU recognizes the N-terminal part of its protein substrates and unfolds these before they are guided to HslV for hydrolysis. The sequence is that of ATP-dependent protease ATPase subunit HslU from Listeria welshimeri serovar 6b (strain ATCC 35897 / DSM 20650 / CCUG 15529 / CIP 8149 / NCTC 11857 / SLCC 5334 / V8).